The primary structure comprises 279 residues: Large ribosomal subunit protein uL2 (279 aa).

2 disordered regions span residues 30-59 (EKSLVRPLPKKGGRNNTGRITTRHKGGGHK) and 225-279 (VMNP…KNKR). The span at 50-59 (TTRHKGGGHK) shows a compositional bias: basic residues. Positions 253-268 (PEGRTRRPNKESDKLI) are enriched in basic and acidic residues. Basic residues predominate over residues 269 to 279 (VRRRRTGKNKR).

This sequence belongs to the universal ribosomal protein uL2 family. As to quaternary structure, part of the 50S ribosomal subunit. Forms a bridge to the 30S subunit in the 70S ribosome.

Its function is as follows. One of the primary rRNA binding proteins. Required for association of the 30S and 50S subunits to form the 70S ribosome, for tRNA binding and peptide bond formation. It has been suggested to have peptidyltransferase activity; this is somewhat controversial. Makes several contacts with the 16S rRNA in the 70S ribosome. The polypeptide is Large ribosomal subunit protein uL2 (Kocuria rhizophila (strain ATCC 9341 / DSM 348 / NBRC 103217 / DC2201)).